The chain runs to 475 residues: ATP synthase subunit beta (475 aa).

152 to 159 (GGAGVGKT) is a binding site for ATP.

The protein belongs to the ATPase alpha/beta chains family. In terms of assembly, F-type ATPases have 2 components, CF(1) - the catalytic core - and CF(0) - the membrane proton channel. CF(1) has five subunits: alpha(3), beta(3), gamma(1), delta(1), epsilon(1). CF(0) has three main subunits: a(1), b(2) and c(9-12). The alpha and beta chains form an alternating ring which encloses part of the gamma chain. CF(1) is attached to CF(0) by a central stalk formed by the gamma and epsilon chains, while a peripheral stalk is formed by the delta and b chains.

It is found in the cell membrane. It catalyses the reaction ATP + H2O + 4 H(+)(in) = ADP + phosphate + 5 H(+)(out). In terms of biological role, produces ATP from ADP in the presence of a proton gradient across the membrane. The catalytic sites are hosted primarily by the beta subunits. In Wolbachia pipientis wMel, this protein is ATP synthase subunit beta.